The primary structure comprises 198 residues: Recombination protein RecR (198 aa).

Residues 56-71 (CEICGNVSEQATCSIC) form a C4-type zinc finger. The region spanning 79–174 (ALICVVEEAK…RVTRLASGLP (96 aa)) is the Toprim domain.

The protein belongs to the RecR family.

Its function is as follows. May play a role in DNA repair. It seems to be involved in an RecBC-independent recombinational process of DNA repair. It may act with RecF and RecO. The polypeptide is Recombination protein RecR (Leifsonia xyli subsp. xyli (strain CTCB07)).